We begin with the raw amino-acid sequence, 506 residues long: Arylsulfatase A (506 aa).

The signal sequence occupies residues 1–17 (MALGTLFLALAAGLSTA). Asp28, Asp29, and Cys68 together coordinate Ca(2+). The Nucleophile role is filled by Cys68. 3-oxoalanine (Cys) is present on Cys68. Lys122 is a binding site for substrate. Residue His124 is part of the active site. Ser149 lines the substrate pocket. Disulfide bonds link Cys155–Cys171 and Cys160–Cys167. Asn157 is a glycosylation site (N-linked (GlcNAc...) asparagine). An N-linked (GlcNAc...) asparagine glycan is attached at Asn183. His228 contacts substrate. 2 residues coordinate Ca(2+): Asp280 and Asn281. 4 disulfides stabilise this stretch: Cys299-Cys413, Cys487-Cys499, Cys488-Cys501, and Cys492-Cys498. Lys301 is a binding site for substrate. An N-linked (GlcNAc...) asparagine glycan is attached at Asn349.

The protein belongs to the sulfatase family. Homodimer at neutral pH and homooctamer at acidic pH. Exists both as a single chain of 58 kDa (component A) or as a chain of 50 kDa (component B) linked by disulfide bond(s) to a 7 kDa chain (component C). Interacts with SUMF1. It depends on Ca(2+) as a cofactor. The conversion to 3-oxoalanine (also known as C-formylglycine, FGly), of a serine or cysteine residue in prokaryotes and of a cysteine residue in eukaryotes, is critical for catalytic activity. This post-translational modification is severely defective in multiple sulfatase deficiency (MSD).

The protein localises to the endoplasmic reticulum. It localises to the lysosome. It catalyses the reaction an N-acyl-1-beta-D-(3-O-sulfo)-galactosyl-sphing-4-enine + H2O = a beta-D-galactosyl-(1&lt;-&gt;1')-N-acylsphing-4-enine + sulfate + H(+). Hydrolyzes cerebroside sulfate. The polypeptide is Arylsulfatase A (Arsa) (Mus musculus (Mouse)).